A 424-amino-acid polypeptide reads, in one-letter code: Probable serine/threonine-protein kinase PBL6 (424 aa).

Positions 1-26 (MGCFGRTPKSNKRSDTKTTKNNDFTP) are disordered. Gly2 is lipidated: N-myristoyl glycine. A lipid anchor (S-palmitoyl cysteine) is attached at Cys3. Thr87 bears the Phosphothreonine mark. One can recognise a Protein kinase domain in the interval 98–377 (FKSDCFLGEG…VVMALDHLAS (280 aa)). ATP contacts are provided by residues 104 to 112 (LGEGGFGKV) and Lys127. The residue at position 172 (Tyr172) is a Phosphotyrosine. Catalysis depends on Asp225, which acts as the Proton acceptor. 2 positions are modified to phosphoserine: Ser229 and Ser259. Phosphothreonine occurs at positions 260 and 265. Tyr273 carries the phosphotyrosine modification.

It belongs to the protein kinase superfamily. Ser/Thr protein kinase family.

It localises to the cell membrane. The catalysed reaction is L-seryl-[protein] + ATP = O-phospho-L-seryl-[protein] + ADP + H(+). It carries out the reaction L-threonyl-[protein] + ATP = O-phospho-L-threonyl-[protein] + ADP + H(+). May be involved in plant defense signaling. This chain is Probable serine/threonine-protein kinase PBL6, found in Arabidopsis thaliana (Mouse-ear cress).